The primary structure comprises 303 residues: Peroxisomal trans-2-enoyl-CoA reductase (303 aa).

Position 23–47 (23–47) interacts with NADP(+); sequence VTGGATGIGKAIVKELLELGSNVVI. Lys-32 is subject to N6-succinyllysine. Ser-49 is modified (phosphoserine). The active-site Proton acceptor is the Tyr-179. Residue Tyr-179 is modified to Phosphotyrosine. The short motif at 301 to 303 is the Microbody targeting signal element; that stretch reads AKL.

This sequence belongs to the short-chain dehydrogenases/reductases (SDR) family. Interacts with PEX5, probably required to target it into peroxisomes.

It localises to the peroxisome. It catalyses the reaction a (2E)-enoyl-CoA + NADPH + H(+) = a 2,3-saturated acyl-CoA + NADP(+). The catalysed reaction is (2E)-hexenoyl-CoA + NADPH + H(+) = hexanoyl-CoA + NADP(+). It carries out the reaction (2E)-octenoyl-CoA + NADPH + H(+) = octanoyl-CoA + NADP(+). The enzyme catalyses (2E)-decenoyl-CoA + NADPH + H(+) = decanoyl-CoA + NADP(+). It catalyses the reaction (2E)-dodecenoyl-CoA + NADPH + H(+) = dodecanoyl-CoA + NADP(+). The catalysed reaction is (2E)-tetradecenoyl-CoA + NADPH + H(+) = tetradecanoyl-CoA + NADP(+). The protein operates within lipid metabolism; fatty acid biosynthesis. Participates in chain elongation of fatty acids. Catalyzes the reduction of trans-2-enoyl-CoAs of varying chain lengths from 6:1 to 16:1, having maximum activity with 10:1 CoA. Has no 2,4-dienoyl-CoA reductase activity. The polypeptide is Peroxisomal trans-2-enoyl-CoA reductase (PECR) (Pongo abelii (Sumatran orangutan)).